The primary structure comprises 424 residues: Serine--tRNA ligase (424 aa).

The interval 109-129 (QEDVPYGESEEDNREERKWGD) is disordered. 231–233 (TAE) contacts L-serine. 262–264 (RSE) contributes to the ATP binding site. E285 is a binding site for L-serine. 349-352 (EISS) is a binding site for ATP. Residue S385 coordinates L-serine.

This sequence belongs to the class-II aminoacyl-tRNA synthetase family. Type-1 seryl-tRNA synthetase subfamily. As to quaternary structure, homodimer. The tRNA molecule binds across the dimer.

The protein localises to the cytoplasm. The catalysed reaction is tRNA(Ser) + L-serine + ATP = L-seryl-tRNA(Ser) + AMP + diphosphate + H(+). The enzyme catalyses tRNA(Sec) + L-serine + ATP = L-seryl-tRNA(Sec) + AMP + diphosphate + H(+). It functions in the pathway aminoacyl-tRNA biosynthesis; selenocysteinyl-tRNA(Sec) biosynthesis; L-seryl-tRNA(Sec) from L-serine and tRNA(Sec): step 1/1. Its function is as follows. Catalyzes the attachment of serine to tRNA(Ser). Is also able to aminoacylate tRNA(Sec) with serine, to form the misacylated tRNA L-seryl-tRNA(Sec), which will be further converted into selenocysteinyl-tRNA(Sec). The chain is Serine--tRNA ligase from Shouchella clausii (strain KSM-K16) (Alkalihalobacillus clausii).